Here is a 139-residue protein sequence, read N- to C-terminus: Putative esterase PM0788 (139 aa).

It belongs to the thioesterase PaaI family.

This Pasteurella multocida (strain Pm70) protein is Putative esterase PM0788.